The following is a 510-amino-acid chain: NAD(P)H-quinone oxidoreductase subunit 2, chloroplastic (510 aa).

12 helical membrane passes run 24–44 (LLLF…GLIL), 59–79 (WFYF…LFRW), 99–119 (IFQF…VEYI), 124–144 (MAIT…MFLC), 149–169 (LITI…LSGY), 183–203 (YLLM…WLYG), 229–249 (ISIA…PAPF), 295–315 (WHLL…LIAI), 323–343 (MLAY…IVGD), 347–367 (GYAS…GTFA), 395–415 (ALSS…AGFF), and 418–438 (LHLF…IGLL).

It belongs to the complex I subunit 2 family. In terms of assembly, NDH is composed of at least 16 different subunits, 5 of which are encoded in the nucleus.

Its subcellular location is the plastid. It localises to the chloroplast thylakoid membrane. The enzyme catalyses a plastoquinone + NADH + (n+1) H(+)(in) = a plastoquinol + NAD(+) + n H(+)(out). It catalyses the reaction a plastoquinone + NADPH + (n+1) H(+)(in) = a plastoquinol + NADP(+) + n H(+)(out). Its function is as follows. NDH shuttles electrons from NAD(P)H:plastoquinone, via FMN and iron-sulfur (Fe-S) centers, to quinones in the photosynthetic chain and possibly in a chloroplast respiratory chain. The immediate electron acceptor for the enzyme in this species is believed to be plastoquinone. Couples the redox reaction to proton translocation, and thus conserves the redox energy in a proton gradient. The chain is NAD(P)H-quinone oxidoreductase subunit 2, chloroplastic from Allium textile (Textile onion).